The primary structure comprises 189 residues: Elongation factor P (189 aa).

Lysine 34 is subject to N6-(3,6-diaminohexanoyl)-5-hydroxylysine.

It belongs to the elongation factor P family. May be beta-lysylated on the epsilon-amino group of Lys-34 by the combined action of EpmA and EpmB, and then hydroxylated on the C5 position of the same residue by EpmC (if this protein is present). Lysylation is critical for the stimulatory effect of EF-P on peptide-bond formation. The lysylation moiety may extend toward the peptidyltransferase center and stabilize the terminal 3-CCA end of the tRNA. Hydroxylation of the C5 position on Lys-34 may allow additional potential stabilizing hydrogen-bond interactions with the P-tRNA.

The protein localises to the cytoplasm. It participates in protein biosynthesis; polypeptide chain elongation. Involved in peptide bond synthesis. Alleviates ribosome stalling that occurs when 3 or more consecutive Pro residues or the sequence PPG is present in a protein, possibly by augmenting the peptidyl transferase activity of the ribosome. Modification of Lys-34 is required for alleviation. The sequence is that of Elongation factor P from Alkalilimnicola ehrlichii (strain ATCC BAA-1101 / DSM 17681 / MLHE-1).